The following is a 476-amino-acid chain: Aspartyl/glutamyl-tRNA(Asn/Gln) amidotransferase subunit B (476 aa).

It belongs to the GatB/GatE family. GatB subfamily. As to quaternary structure, heterotrimer of A, B and C subunits.

The catalysed reaction is L-glutamyl-tRNA(Gln) + L-glutamine + ATP + H2O = L-glutaminyl-tRNA(Gln) + L-glutamate + ADP + phosphate + H(+). It carries out the reaction L-aspartyl-tRNA(Asn) + L-glutamine + ATP + H2O = L-asparaginyl-tRNA(Asn) + L-glutamate + ADP + phosphate + 2 H(+). Functionally, allows the formation of correctly charged Asn-tRNA(Asn) or Gln-tRNA(Gln) through the transamidation of misacylated Asp-tRNA(Asn) or Glu-tRNA(Gln) in organisms which lack either or both of asparaginyl-tRNA or glutaminyl-tRNA synthetases. The reaction takes place in the presence of glutamine and ATP through an activated phospho-Asp-tRNA(Asn) or phospho-Glu-tRNA(Gln). This chain is Aspartyl/glutamyl-tRNA(Asn/Gln) amidotransferase subunit B, found in Clostridium botulinum (strain Kyoto / Type A2).